A 182-amino-acid chain; its full sequence is Protein GrpE (182 aa).

Over residues M1–E17 the composition is skewed to basic and acidic residues. The tract at residues M1–V33 is disordered.

The protein belongs to the GrpE family. In terms of assembly, homodimer.

It is found in the cytoplasm. Participates actively in the response to hyperosmotic and heat shock by preventing the aggregation of stress-denatured proteins, in association with DnaK and GrpE. It is the nucleotide exchange factor for DnaK and may function as a thermosensor. Unfolded proteins bind initially to DnaJ; upon interaction with the DnaJ-bound protein, DnaK hydrolyzes its bound ATP, resulting in the formation of a stable complex. GrpE releases ADP from DnaK; ATP binding to DnaK triggers the release of the substrate protein, thus completing the reaction cycle. Several rounds of ATP-dependent interactions between DnaJ, DnaK and GrpE are required for fully efficient folding. The sequence is that of Protein GrpE from Borrelia hermsii (strain HS1 / DAH).